We begin with the raw amino-acid sequence, 405 residues long: Histone deacetylase clr6 (405 aa).

The tract at residues 6 to 318 (KKVSYFYDED…WTYETGLLAG (313 aa)) is histone deacetylase. H138 is an active-site residue.

Belongs to the histone deacetylase family. HD type 1 subfamily. As to quaternary structure, heterotetramer of alp13, clr6, prw1 and pst2.

The protein localises to the nucleus. The catalysed reaction is N(6)-acetyl-L-lysyl-[histone] + H2O = L-lysyl-[histone] + acetate. Its function is as follows. Responsible for the deacetylation of lysine residues on the N-terminal part of the core histones (H2A, H2B, H3 and H4). Histone deacetylation gives a tag for epigenetic repression and plays an important role in transcriptional regulation, cell cycle progression and developmental events. Histone deacetylases act via the formation of large multiprotein complexes. Has a role in chromatin assembly and chromosome segregation. This Schizosaccharomyces pombe (strain 972 / ATCC 24843) (Fission yeast) protein is Histone deacetylase clr6 (clr6).